The following is a 154-amino-acid chain: Ribosomal RNA large subunit methyltransferase H (154 aa).

Residues L70, G102, and 121–126 (LSRMTL) each bind S-adenosyl-L-methionine.

This sequence belongs to the RNA methyltransferase RlmH family. Homodimer.

Its subcellular location is the cytoplasm. The catalysed reaction is pseudouridine(1915) in 23S rRNA + S-adenosyl-L-methionine = N(3)-methylpseudouridine(1915) in 23S rRNA + S-adenosyl-L-homocysteine + H(+). Specifically methylates the pseudouridine at position 1915 (m3Psi1915) in 23S rRNA. The protein is Ribosomal RNA large subunit methyltransferase H of Citrifermentans bemidjiense (strain ATCC BAA-1014 / DSM 16622 / JCM 12645 / Bem) (Geobacter bemidjiensis).